Reading from the N-terminus, the 705-residue chain is Ribosomal RNA large subunit methyltransferase K/L (705 aa).

Residues 42–154 (LAQKVCLSTR…RYGVSMYIDY (113 aa)) enclose the THUMP domain.

It belongs to the methyltransferase superfamily. RlmKL family.

Its subcellular location is the cytoplasm. It catalyses the reaction guanosine(2445) in 23S rRNA + S-adenosyl-L-methionine = N(2)-methylguanosine(2445) in 23S rRNA + S-adenosyl-L-homocysteine + H(+). It carries out the reaction guanosine(2069) in 23S rRNA + S-adenosyl-L-methionine = N(2)-methylguanosine(2069) in 23S rRNA + S-adenosyl-L-homocysteine + H(+). Functionally, specifically methylates the guanine in position 2445 (m2G2445) and the guanine in position 2069 (m7G2069) of 23S rRNA. This Pseudoalteromonas translucida (strain TAC 125) protein is Ribosomal RNA large subunit methyltransferase K/L.